The primary structure comprises 374 residues: Heat stress transcription factor A-8 (374 aa).

The DNA-binding element occupies 17–112; sequence VAPFLRKCYD…LLKNVIRRKN (96 aa). The hydrophobic repeat HR-A/B stretch occupies residues 126–192; sequence TTYAQEKSGL…EMLSFLVMVM (67 aa). Residues 285 to 294 carry the AHA1 motif; sequence DGAWEKLLLL. A Nuclear localization signal motif is present at residues 298 to 303; sequence RKKTKK. Positions 330–339 match the AHA2 motif; it reads KSYMLKLISE. Positions 363–370 match the Nuclear export signal motif; it reads LTEQMELL.

The protein belongs to the HSF family. Class A subfamily. In terms of assembly, homotrimer. In terms of processing, exhibits temperature-dependent phosphorylation.

The protein localises to the cytoplasm. Its subcellular location is the nucleus. Functionally, transcriptional activator that specifically binds DNA sequence 5'-AGAAnnTTCT-3' known as heat shock promoter elements (HSE). This Arabidopsis thaliana (Mouse-ear cress) protein is Heat stress transcription factor A-8 (HSFA8).